A 423-amino-acid chain; its full sequence is Serine hydroxymethyltransferase (423 aa).

(6S)-5,6,7,8-tetrahydrofolate-binding positions include L120 and 124-126; that span reads GHL. K229 carries the post-translational modification N6-(pyridoxal phosphate)lysine. 353–355 lines the (6S)-5,6,7,8-tetrahydrofolate pocket; it reads SPF.

Belongs to the SHMT family. Homodimer. The cofactor is pyridoxal 5'-phosphate.

The protein resides in the cytoplasm. It catalyses the reaction (6R)-5,10-methylene-5,6,7,8-tetrahydrofolate + glycine + H2O = (6S)-5,6,7,8-tetrahydrofolate + L-serine. It functions in the pathway one-carbon metabolism; tetrahydrofolate interconversion. Its pathway is amino-acid biosynthesis; glycine biosynthesis; glycine from L-serine: step 1/1. Its function is as follows. Catalyzes the reversible interconversion of serine and glycine with tetrahydrofolate (THF) serving as the one-carbon carrier. This reaction serves as the major source of one-carbon groups required for the biosynthesis of purines, thymidylate, methionine, and other important biomolecules. Also exhibits THF-independent aldolase activity toward beta-hydroxyamino acids, producing glycine and aldehydes, via a retro-aldol mechanism. The polypeptide is Serine hydroxymethyltransferase (Prochlorococcus marinus (strain MIT 9301)).